Here is a 461-residue protein sequence, read N- to C-terminus: D-phenylhydantoinase (461 aa).

The a divalent metal cation site is built by His59, His61, and Lys151. At Lys151 the chain carries N6-carboxylysine. Substrate is bound at residue Tyr156. Positions 182 and 239 each coordinate a divalent metal cation. Residue Ser286 participates in substrate binding. Asp313 contributes to the a divalent metal cation binding site. Asn335 lines the substrate pocket.

It belongs to the metallo-dependent hydrolases superfamily. Hydantoinase/dihydropyrimidinase family. Homotetramer. Requires a divalent metal cation as cofactor. Carboxylation allows a single lysine to coordinate two divalent metal cations.

The enzyme catalyses D-5-phenylhydantoin + H2O = N-carbamoyl-D-phenylglycine + H(+). Its function is as follows. Catalyzes the stereospecific hydrolysis of the cyclic amide bond of D-hydantoin derivatives with an aromatic side chains at the 5'-position. Has no activity on dihydropyrimidines. The physiological function is unknown. The chain is D-phenylhydantoinase from Escherichia coli O9:H4 (strain HS).